The sequence spans 433 residues: UDP-N-acetylmuramoylalanine--D-glutamate ligase (433 aa).

125-131 (GTSGKTT) serves as a coordination point for ATP.

The protein belongs to the MurCDEF family.

The protein resides in the cytoplasm. The enzyme catalyses UDP-N-acetyl-alpha-D-muramoyl-L-alanine + D-glutamate + ATP = UDP-N-acetyl-alpha-D-muramoyl-L-alanyl-D-glutamate + ADP + phosphate + H(+). It participates in cell wall biogenesis; peptidoglycan biosynthesis. Its function is as follows. Cell wall formation. Catalyzes the addition of glutamate to the nucleotide precursor UDP-N-acetylmuramoyl-L-alanine (UMA). In Nitratidesulfovibrio vulgaris (strain ATCC 29579 / DSM 644 / CCUG 34227 / NCIMB 8303 / VKM B-1760 / Hildenborough) (Desulfovibrio vulgaris), this protein is UDP-N-acetylmuramoylalanine--D-glutamate ligase.